We begin with the raw amino-acid sequence, 230 residues long: UPF0173 metal-dependent hydrolase TM1040_1920 (230 aa).

This sequence belongs to the UPF0173 family.

The protein is UPF0173 metal-dependent hydrolase TM1040_1920 of Ruegeria sp. (strain TM1040) (Silicibacter sp.).